A 597-amino-acid chain; its full sequence is Elongation factor 4 (597 aa).

The tr-type G domain occupies Asp2–Lys184. GTP contacts are provided by residues Asp14–Thr19 and Asn131–Asp134.

Belongs to the TRAFAC class translation factor GTPase superfamily. Classic translation factor GTPase family. LepA subfamily.

Its subcellular location is the cell inner membrane. The catalysed reaction is GTP + H2O = GDP + phosphate + H(+). Its function is as follows. Required for accurate and efficient protein synthesis under certain stress conditions. May act as a fidelity factor of the translation reaction, by catalyzing a one-codon backward translocation of tRNAs on improperly translocated ribosomes. Back-translocation proceeds from a post-translocation (POST) complex to a pre-translocation (PRE) complex, thus giving elongation factor G a second chance to translocate the tRNAs correctly. Binds to ribosomes in a GTP-dependent manner. This chain is Elongation factor 4, found in Burkholderia multivorans (strain ATCC 17616 / 249).